A 648-amino-acid chain; its full sequence is MASTVALLRDSSDDRENFDDGETDCVQVGRKRKLTVFFYPLLLVFWLLRWVFYQFFLVLCFVCRGFVPRRHLATAETTTTMATAEEPDANLLIRQKQHHKKAFDFISKALKYDEENEDFKEMSIDLYRKGIEELQKGIAIDFSKGQGTTWERAHRLSDKMKVNLEMARDRLDFLESMVKIEHLGDHLPWHGGVAPAQRGQRRRAWQKAAPSAPSEPGTGPSWLKMAENGPAKGGPCPTSPRLQRSNTGVTLRRQQQQQLGGVSTVSRSQTLPRNSVPCPRMSARSPSRKAGNNEAVPTPNTARRRASQPQVPPVHPRGRQPTTRGGAAHRGGPPTVSQRSLLSSRVPPLKGVDSRLAHLILDEVVDGAPPVLFSDIAGQEVAKQALSEMVILPTDRPELFTGLRAPPKGLLLFGPPGNGKTMLAKAVAHESNSTFLNISAASLTSKYVGEGEKLVRALFAVARELQPSIIFIDEVDSLLSERKDNEHEATRRLKTEFLVEFDGLHTGSEERVLVMGATNRPQELDDAALRRFTKRVYVTLPDHNTRVILLEKLLKKHNNPLSADKLKYLARLTEGYSGSDLTALAKDAALGPIRELNPEQVRCVDPKKMRNISLQDFLDSLKKVRRSVTPQSLDFFDRWNREFGDITV.

The Cytoplasmic portion of the chain corresponds to 1 to 40 (MASTVALLRDSSDDRENFDDGETDCVQVGRKRKLTVFFYP). Positions 41 to 61 (LLLVFWLLRWVFYQFFLVLCF) form an intramembrane region, helical. Topologically, residues 62–648 (VCRGFVPRRH…WNREFGDITV (587 aa)) are cytoplasmic. In terms of domain architecture, MIT spans 99 to 174 (HKKAFDFISK…EMARDRLDFL (76 aa)). The tract at residues 188–346 (PWHGGVAPAQ…SQRSLLSSRV (159 aa)) is disordered. Positions 247-266 (TGVTLRRQQQQQLGGVSTVS) are enriched in low complexity. Position 414–421 (414–421 (GPPGNGKT)) interacts with ATP.

It belongs to the AAA ATPase family. Spastin subfamily. In terms of assembly, homohexamer. The homohexamer is stabilized by ATP-binding. The homohexamer may adopt a ring conformation through which microtubules pass prior to being severed. Interacts with microtubules.

The protein localises to the membrane. It localises to the cytoplasm. It is found in the cytoskeleton. Its subcellular location is the microtubule organizing center. The protein resides in the centrosome. It carries out the reaction n ATP + n H2O + a microtubule = n ADP + n phosphate + (n+1) alpha/beta tubulin heterodimers.. Functionally, ATP-dependent microtubule severing protein. Microtubule severing may promote reorganization of cellular microtubule arrays and the release of microtubules from the microtubule organizing center following nucleation. The polypeptide is Spastin (spas) (Ixodes scapularis (Black-legged tick)).